A 398-amino-acid polypeptide reads, in one-letter code: 2,3-bisphosphoglycerate-independent phosphoglycerate mutase (398 aa).

The protein belongs to the BPG-independent phosphoglycerate mutase family. A-PGAM subfamily.

The enzyme catalyses (2R)-2-phosphoglycerate = (2R)-3-phosphoglycerate. The protein operates within carbohydrate degradation; glycolysis; pyruvate from D-glyceraldehyde 3-phosphate: step 3/5. Its function is as follows. Catalyzes the interconversion of 2-phosphoglycerate and 3-phosphoglycerate. This is 2,3-bisphosphoglycerate-independent phosphoglycerate mutase from Methanosarcina barkeri (strain Fusaro / DSM 804).